Here is a 155-residue protein sequence, read N- to C-terminus: Ribosomal RNA large subunit methyltransferase H (155 aa).

Residues Leu72, Gly103, and 122–127 (LSDLTL) each bind S-adenosyl-L-methionine.

The protein belongs to the RNA methyltransferase RlmH family. In terms of assembly, homodimer.

Its subcellular location is the cytoplasm. It carries out the reaction pseudouridine(1915) in 23S rRNA + S-adenosyl-L-methionine = N(3)-methylpseudouridine(1915) in 23S rRNA + S-adenosyl-L-homocysteine + H(+). Its function is as follows. Specifically methylates the pseudouridine at position 1915 (m3Psi1915) in 23S rRNA. In Variovorax paradoxus (strain S110), this protein is Ribosomal RNA large subunit methyltransferase H.